The following is a 522-amino-acid chain: Berberine bridge enzyme-like Cyn d 4 (522 aa).

Residues 1–25 (MARSRAFAFALLICAVAASCHVALS) form the signal peptide. An intrachain disulfide couples Cys41 to Cys98. One can recognise an FAD-binding PCMH-type domain in the interval 76–252 (KTVKPLYIIT…ASWQVKLLPV (177 aa)). An N-linked (GlcNAc...) asparagine glycan is attached at Asn88. FAD-binding positions include 108–114 (VRSGGHD), Ser119, Ser152, 176–177 (VC), 181–185 (GVGGH), Phe191, Glu237, and Val242. Positions 113–177 (HDYEGLSYRS…PKLGFPAGVC (65 aa)) form a cross-link, 6-(S-cysteinyl)-8alpha-(pros-histidyl)-FAD (His-Cys). Cys308 and Cys329 form a disulfide bridge. N-linked (GlcNAc...) asparagine glycans are attached at residues Asn325 and Asn354. 461–465 (YVNYR) contacts FAD. An N-linked (GlcNAc...) asparagine glycan is attached at Asn477.

It belongs to the oxygen-dependent FAD-linked oxidoreductase family. Monomer. It depends on FAD as a cofactor. The FAD cofactor is bound via a bicovalent 6-S-cysteinyl, 8alpha-N1-histidyl FAD linkage. In terms of processing, the N-terminus is blocked. Post-translationally, glycosylated. N-glycosylated. Contains fucose, N-acetylglucosamine, and mannose as main carbohydrates (in a ratio of approximately 3:2:1), and a minute amount of xylose. The two most abundant oligosaccharides are Fuc(1)GlcNAc(2)Man(3) and Fuc(1)GlcNAc(2)Man(2), together comprising about 80% of the total carbohydrate content. They are structurally unusual in having a L-Fuc alpha-(1,3)-linked to Asn-linked GlcNAc without a Xyl beta-(1,2)-linked to the branching Man. The other oligosaccharides make up only 9% of the total carbohydrate content and are characterized by the presence of Xyl beta-(1,2)-linked to the branching Man. In terms of tissue distribution, expressed in pollen (at protein level).

The sequence is that of Berberine bridge enzyme-like Cyn d 4 from Cynodon dactylon (Bermuda grass).